The primary structure comprises 211 residues: Urease accessory protein UreE (211 aa).

Residues 170-211 (EHHGHSHDRGCDHSHSHSHDHDHDHGHVHGPGCGHAPHHRHD) are disordered. The segment covering 176-196 (HDRGCDHSHSHSHDHDHDHGH) has biased composition (basic and acidic residues).

The protein belongs to the UreE family.

The protein localises to the cytoplasm. Its function is as follows. Involved in urease metallocenter assembly. Binds nickel. Probably functions as a nickel donor during metallocenter assembly. The chain is Urease accessory protein UreE from Ralstonia nicotianae (strain ATCC BAA-1114 / GMI1000) (Ralstonia solanacearum).